Here is a 338-residue protein sequence, read N- to C-terminus: Nickel transporter NixA (338 aa).

8 helical membrane-spanning segments follow: residues tryptophan 11–isoleucine 31, histidine 37–alanine 57, glycine 79–leucine 99, phenylalanine 127–phenylalanine 147, valine 187–leucine 207, alanine 217–leucine 237, isoleucine 266–leucine 286, and tyrosine 307–tryptophan 327.

It belongs to the NiCoT transporter (TC 2.A.52) family.

The protein localises to the cell membrane. Secondary nickel transporter. Required for full urease activity. In Staphylococcus aureus (strain NCTC 8325 / PS 47), this protein is Nickel transporter NixA.